We begin with the raw amino-acid sequence, 493 residues long: Transcription termination factor MTERF5, chloroplastic (493 aa).

A chloroplast-targeting transit peptide spans 1 to 43; that stretch reads MQSLSQLGPSEIFLVARREKPSTRAQLWFTGRLSFRQETNGIR.

Belongs to the mTERF family. Interacts with pTAC6. In terms of tissue distribution, expressed in roots, rosette leaves, cauline leaves, stems, flower buds and open flowers.

The protein resides in the plastid. It is found in the chloroplast. In terms of biological role, transcription termination factor required for processing and steady-state levels of plastid transcripts. Involved also in chloroplast transcriptional pausing, a general feature of chloroplast genes. Specifically and positively regulates the transcription of chloroplast psbEFLJ encoding for photosystem II (PSII) core subunits psbE, psbF, psbL and psbJ; causes the plastid-encoded RNA polymerase (PEP) complex to pause at psbEFLJ by binding to the +30 to +51 region of double-stranded DNA, and recruits additional pTAC6 to the transcriptionally paused region of psbEFLJ. May play a role in response to abiotic stresses. The polypeptide is Transcription termination factor MTERF5, chloroplastic (Arabidopsis thaliana (Mouse-ear cress)).